Here is a 610-residue protein sequence, read N- to C-terminus: Glutamine--fructose-6-phosphate aminotransferase [isomerizing] (610 aa).

The Nucleophile; for GATase activity role is filled by Cys-2. The region spanning 2–218 (CGIVGAVAQR…EGDVAEITRR (217 aa)) is the Glutamine amidotransferase type-2 domain. SIS domains are found at residues 286–426 (AADI…EQGR) and 459–600 (LATD…VDQP). The active-site For Fru-6P isomerization activity is the Lys-605.

In terms of assembly, homodimer.

It is found in the cytoplasm. The catalysed reaction is D-fructose 6-phosphate + L-glutamine = D-glucosamine 6-phosphate + L-glutamate. Its function is as follows. Catalyzes the first step in hexosamine metabolism, converting fructose-6P into glucosamine-6P using glutamine as a nitrogen source. The chain is Glutamine--fructose-6-phosphate aminotransferase [isomerizing] from Vibrio parahaemolyticus serotype O3:K6 (strain RIMD 2210633).